We begin with the raw amino-acid sequence, 360 residues long: MSQNVISQPVEAQQSFARAVTESLPGLLLVCAVALVASFVAPKLEAYPLFKTYLSLKDFILAIIFGIIIRNTVGVPAVFQPGLRYSTIMTKTGIVIMGSSYSLAGLVSVGAQALVFIAVFLFGTALVMMWLCRKVGMSTPLAACLAAGMSVCGVSATIAIAPAVKAKNEDMAYSIAVVLMFGLLALIAFPLIGKVFNLTPEQFGAFAGVGIVNSAQVLAAGFGFSQEAGIVAGIYNIGRVVFLPFVVLMLAIMAAAQEAEQGNEVAKINKWQMIRDKFPLFVLGFLAIVCLNTAGVLTKPEVKMAKHFMEWAFLLGFASIGLTTRLSDLRAAGLNGFLFGFGVAGLKAALALAAVLLFMS.

10 consecutive transmembrane segments (helical) span residues 20 to 42 (VTES…FVAP), 57 to 79 (KDFI…PAVF), 100 to 122 (SYSL…VFLF), 142 to 164 (AACL…APAV), 171 to 193 (MAYS…PLIG), 203 to 225 (FGAF…FGFS), 232 to 254 (AGIY…AIMA), 278 to 297 (FPLF…AGVL), 310 to 327 (EWAF…TRLS), and 337 to 359 (FLFG…LLFM).

This sequence belongs to the UPF0324 family.

It localises to the cell membrane. The sequence is that of UPF0324 membrane protein DVU_0123 from Nitratidesulfovibrio vulgaris (strain ATCC 29579 / DSM 644 / CCUG 34227 / NCIMB 8303 / VKM B-1760 / Hildenborough) (Desulfovibrio vulgaris).